A 165-amino-acid chain; its full sequence is Small ribosomal subunit protein uS5 (165 aa).

In terms of domain architecture, S5 DRBM spans leucine 13 to valine 76.

This sequence belongs to the universal ribosomal protein uS5 family. Part of the 30S ribosomal subunit. Contacts proteins S4 and S8.

Functionally, with S4 and S12 plays an important role in translational accuracy. In terms of biological role, located at the back of the 30S subunit body where it stabilizes the conformation of the head with respect to the body. This chain is Small ribosomal subunit protein uS5, found in Oenococcus oeni (strain ATCC BAA-331 / PSU-1).